Here is a 387-residue protein sequence, read N- to C-terminus: Patatin group D-3 (387 aa).

A signal peptide spans 1-23 (MATTKSFLILIVMILATTSSTFA). The region spanning 32–230 (LSIDGGGIKG…TVADPALLSI (199 aa)) is the PNPLA domain. The short motif at 36 to 41 (GGGIKG) is the GXGXXG element. The GXSXG signature appears at 75-79 (GTSTG). The active-site Nucleophile is the S77. Residue N115 is glycosylated (N-linked (GlcNAc...) asparagine). The active-site Proton acceptor is D216. The DGA/G motif lies at 216–218 (DGA). Positions 361–385 (ETYEEALKRFAKLLSDRKKLRANKA) form a coiled coil.

This sequence belongs to the patatin family. As to expression, tuber.

It localises to the vacuole. Functionally, probable lipolytic acyl hydrolase (LAH), an activity which is thought to be involved in the response of tubers to pathogens. The chain is Patatin group D-3 from Solanum tuberosum (Potato).